The chain runs to 793 residues: RNA-binding protein spenito (793 aa).

Disordered stretches follow at residues 1–93 and 243–296; these read MSSH…PPAE and HHDY…KKDK. A compositionally biased stretch (low complexity) spans 25–42; it reads SRSPGPASRSSLSRNSRS. The span at 257-268 shows a compositional bias: basic residues; the sequence is RGGHPHHLHGHA. The segment covering 285-296 has biased composition (basic and acidic residues); the sequence is APYEKPESKKDK. RRM domains are found at residues 314–391 and 395–469; these read RTLF…YGKV and TRMW…FAEL. The interval 507-623 is disordered; that stretch reads YAPRGGYSPY…RNDALASAST (117 aa). A compositionally biased stretch (basic residues) spans 526 to 536; it reads GGYRGRGRGMY. Residues 566–593 are compositionally biased toward basic and acidic residues; that stretch reads DEWRRPPGESYDRGARSSSREPGVERSR. The 168-residue stretch at 624–791 folds into the SPOC domain; the sequence is VPDVARKCST…HLVIVVVRGG (168 aa).

The protein belongs to the RRM Spen family. In terms of assembly, component of the WMM complex, a N6-methyltransferase complex composed of a catalytic subcomplex, named MAC, and of an associated subcomplex, named MACOM. The MAC subcomplex is composed of Ime4/Mettl3 and Mettl14. The MACOM subcomplex is composed of fl(2)d, Flacc/Xio, Hakai, vir, and, in some cases of nito. Interacts with Sxl. Interacts with Hipk; leading to phosphorylation. Post-translationally, phosphorylated by Hipk at Ser-23, Ser-25 and/or Ser-27; the precise position if phosphorylation sites is unknown. Widely expressed. Shows some enrichment in the central nervous system.

The protein resides in the nucleus. Functionally, RNA-binding protein that acts as an associated component of the WMM complex, a complex that mediates N6-methyladenosine (m6A) methylation of mRNAs. M6a modification plays a role in the efficiency of mRNA splicing and is required for sex determination. In the WMM complex, may act by binding target RNAs and recruiting the WMM complex. Required for sex determination and dosage compensation via Sxl alternative splicing: m6A methylation acts as a key regulator of Sxl pre-mRNA and promotes female-specific alternative splicing of Sxl, which determines female physiognomy. M6A methylation is also required for neuronal functions. Acts as a positive regulator of canonical Wg signaling during wing disk and eye development. In Drosophila melanogaster (Fruit fly), this protein is RNA-binding protein spenito.